Consider the following 83-residue polypeptide: Exodeoxyribonuclease 7 small subunit (83 aa).

Belongs to the XseB family. In terms of assembly, heterooligomer composed of large and small subunits.

Its subcellular location is the cytoplasm. It catalyses the reaction Exonucleolytic cleavage in either 5'- to 3'- or 3'- to 5'-direction to yield nucleoside 5'-phosphates.. Its function is as follows. Bidirectionally degrades single-stranded DNA into large acid-insoluble oligonucleotides, which are then degraded further into small acid-soluble oligonucleotides. The polypeptide is Exodeoxyribonuclease 7 small subunit (Bradyrhizobium diazoefficiens (strain JCM 10833 / BCRC 13528 / IAM 13628 / NBRC 14792 / USDA 110)).